Reading from the N-terminus, the 294-residue chain is Mitochondrial glycine transporter (294 aa).

Solcar repeat units follow at residues 5–84 (RRAT…IRQA), 102–186 (LNMY…MKVL), and 208–292 (ASTL…IVKK). Transmembrane regions (helical) follow at residues 11–36 (LIGGFSGGLVSAIILQPFDLLKTRLQ), 59–85 (GALPSCIRTSVGSAMYLTMLNSIRQAI), 108–133 (MFSGAVTRALTGLITMPITVIKVRYE), 161–184 (GFGATALRDAPYAGLYMLFYDRMK), 212–238 (INGSSAFSAAVIATSITAPFDTVKTRM), and 267–285 (GISLRLTRKAFSAGIAWGI).

It belongs to the mitochondrial carrier (TC 2.A.29) family. SLC25A38 subfamily.

It localises to the mitochondrion inner membrane. It catalyses the reaction glycine(in) = glycine(out). Its function is as follows. Mitochondrial glycine transporter that imports glycine into the mitochondrial matrix. Plays an important role in providing glycine for the first enzymatic step in heme biosynthesis, the condensation of glycine with succinyl-CoA to produce 5-aminolevulinate (ALA) in the mitochondrial matrix. This is Mitochondrial glycine transporter from Kluyveromyces lactis (strain ATCC 8585 / CBS 2359 / DSM 70799 / NBRC 1267 / NRRL Y-1140 / WM37) (Yeast).